A 338-amino-acid polypeptide reads, in one-letter code: Ketol-acid reductoisomerase (NADP(+)) (338 aa).

Residues 1-181 (MKVFYDKDCD…GGGRAGIIET (181 aa)) form the KARI N-terminal Rossmann domain. Residues 24–27 (YGSQ), arginine 47, and serine 52 contribute to the NADP(+) site. Histidine 107 is an active-site residue. Glycine 133 contacts NADP(+). The 146-residue stretch at 182-327 (NFREETETDL…AKLRAMMPWI (146 aa)) folds into the KARI C-terminal knotted domain. Mg(2+) is bound by residues aspartate 190, glutamate 194, glutamate 226, and glutamate 230. Serine 251 is a substrate binding site.

It belongs to the ketol-acid reductoisomerase family. It depends on Mg(2+) as a cofactor.

It carries out the reaction (2R)-2,3-dihydroxy-3-methylbutanoate + NADP(+) = (2S)-2-acetolactate + NADPH + H(+). The enzyme catalyses (2R,3R)-2,3-dihydroxy-3-methylpentanoate + NADP(+) = (S)-2-ethyl-2-hydroxy-3-oxobutanoate + NADPH + H(+). It functions in the pathway amino-acid biosynthesis; L-isoleucine biosynthesis; L-isoleucine from 2-oxobutanoate: step 2/4. The protein operates within amino-acid biosynthesis; L-valine biosynthesis; L-valine from pyruvate: step 2/4. In terms of biological role, involved in the biosynthesis of branched-chain amino acids (BCAA). Catalyzes an alkyl-migration followed by a ketol-acid reduction of (S)-2-acetolactate (S2AL) to yield (R)-2,3-dihydroxy-isovalerate. In the isomerase reaction, S2AL is rearranged via a Mg-dependent methyl migration to produce 3-hydroxy-3-methyl-2-ketobutyrate (HMKB). In the reductase reaction, this 2-ketoacid undergoes a metal-dependent reduction by NADPH to yield (R)-2,3-dihydroxy-isovalerate. In Janthinobacterium sp. (strain Marseille) (Minibacterium massiliensis), this protein is Ketol-acid reductoisomerase (NADP(+)).